The following is a 255-amino-acid chain: Increased copper sensitivity protein 2 (255 aa).

Residues 1–12 are compositionally biased toward basic and acidic residues; sequence MGKFEQKERERI. Disordered stretches follow at residues 1 to 32 and 82 to 142; these read MGKFEQKERERISTFSFPTTGSQSSTSIKSLG and PGDK…RKSH. A compositionally biased stretch (polar residues) spans 13 to 30; it reads STFSFPTTGSQSSTSIKS. Positions 131–142 are enriched in basic residues; the sequence is SGRRKSYHRKSH. Phosphoserine is present on S217.

This chain is Increased copper sensitivity protein 2 (ICS2), found in Saccharomyces cerevisiae (strain ATCC 204508 / S288c) (Baker's yeast).